Here is a 233-residue protein sequence, read N- to C-terminus: Transcriptional regulatory protein PrrA (233 aa).

One can recognise a Response regulatory domain in the interval 9-123; that stretch reads RVLVVDDDSD…ELVARVKALL (115 aa). Asp58 carries the post-translational modification 4-aspartylphosphate. A DNA-binding region (ompR/PhoB-type) is located at residues 134–232; it reads SETIAVGPLE…VRGVGFVLRM (99 aa).

Phosphorylated by PrrB at Asp-58.

It localises to the cytoplasm. Functionally, member of the two-component regulatory system PrrB/PrrA that is involved specifically in early intracellular multiplication of Mycobacterium and is essential for its viability. Upon phosphorylation by PrrB, functions as a transcription regulator by direct binding to promoter regions of target genes to positively regulate their expression. Autoregulates its own expression. This is Transcriptional regulatory protein PrrA (prrA) from Mycobacterium leprae (strain TN).